A 441-amino-acid polypeptide reads, in one-letter code: 3-phosphoshikimate 1-carboxyvinyltransferase (441 aa).

3-phosphoshikimate contacts are provided by lysine 22, serine 23, and arginine 27. Phosphoenolpyruvate is bound at residue lysine 22. Phosphoenolpyruvate is bound by residues glycine 95 and arginine 123. Positions 168, 170, 321, and 348 each coordinate 3-phosphoshikimate. Glutamine 170 contacts phosphoenolpyruvate. Aspartate 321 serves as the catalytic Proton acceptor. Phosphoenolpyruvate contacts are provided by arginine 352 and arginine 400.

Belongs to the EPSP synthase family. As to quaternary structure, monomer.

The protein localises to the cytoplasm. The catalysed reaction is 3-phosphoshikimate + phosphoenolpyruvate = 5-O-(1-carboxyvinyl)-3-phosphoshikimate + phosphate. Its pathway is metabolic intermediate biosynthesis; chorismate biosynthesis; chorismate from D-erythrose 4-phosphate and phosphoenolpyruvate: step 6/7. Its function is as follows. Catalyzes the transfer of the enolpyruvyl moiety of phosphoenolpyruvate (PEP) to the 5-hydroxyl of shikimate-3-phosphate (S3P) to produce enolpyruvyl shikimate-3-phosphate and inorganic phosphate. The protein is 3-phosphoshikimate 1-carboxyvinyltransferase of Novosphingobium aromaticivorans (strain ATCC 700278 / DSM 12444 / CCUG 56034 / CIP 105152 / NBRC 16084 / F199).